A 356-amino-acid chain; its full sequence is Ferrochelatase (356 aa).

Fe cation-binding residues include His-214 and Glu-295.

The protein belongs to the ferrochelatase family.

It localises to the cytoplasm. It carries out the reaction heme b + 2 H(+) = protoporphyrin IX + Fe(2+). Its pathway is porphyrin-containing compound metabolism; protoheme biosynthesis; protoheme from protoporphyrin-IX: step 1/1. In terms of biological role, catalyzes the ferrous insertion into protoporphyrin IX. This chain is Ferrochelatase, found in Paraburkholderia phytofirmans (strain DSM 17436 / LMG 22146 / PsJN) (Burkholderia phytofirmans).